The chain runs to 100 residues: UPF0473 protein LMHCC_1068 (100 aa).

The protein belongs to the UPF0473 family.

This chain is UPF0473 protein LMHCC_1068, found in Listeria monocytogenes serotype 4a (strain HCC23).